We begin with the raw amino-acid sequence, 281 residues long: Arabinooligosaccharides transport system permease protein AraQ (281 aa).

6 helical membrane passes run 15-35 (LTLFFMMLSLLYLFPIFCLLL), 81-101 (LVLGLFTTVLTLFFSSMIGYG), 112-132 (IIFVLVLIIMMVPLEVMMLPL), 142-162 (IDSYTGVILPFIVSPVAVFFF), 185-205 (FGIFFRIMAPLMKPAFGAMII), and 247-267 (MLISGSVFAILPVIIIFLFFQ). The region spanning 77-266 (FFNSLVLGLF…LPVIIIFLFF (190 aa)) is the ABC transmembrane type-1 domain.

The protein belongs to the binding-protein-dependent transport system permease family. MalFG subfamily. As to quaternary structure, the complex is composed of two ATP-binding proteins (MsmX), two transmembrane proteins (AraP and AraQ) and a solute-binding protein (AraN).

It is found in the cell membrane. In terms of biological role, part of the ABC transporter complex AraNPQ involved in the uptake of arabinooligosaccharides. Transports alpha-1,5-arabinooligosaccharides, at least up to four L-arabinosyl units. Responsible for the translocation of the substrate across the membrane. The polypeptide is Arabinooligosaccharides transport system permease protein AraQ (Bacillus subtilis (strain 168)).